The chain runs to 120 residues: U13-lycotoxin-Ls1a (120 aa).

Residues 1–16 (MKILFVLISILYAVYC) form the signal peptide. Positions 17–54 (FSSEEDVDSAYLANELEPVEDINSEQYAALEPKEEQGR) are excised as a propeptide. Disulfide bonds link C56–C70, C63–C76, C69–C87, and C78–C85. In terms of domain architecture, Agouti spans 56-95 (CADMGQDCKDDCDCCLNIATCNCWFGRYFCSCTFGDYQTC).

The protein belongs to the neurotoxin 05 (agouti) family. Contains 6 disulfide bonds. Expressed by the venom gland.

The protein resides in the secreted. The sequence is that of U13-lycotoxin-Ls1a from Lycosa singoriensis (Wolf spider).